Reading from the N-terminus, the 82-residue chain is ATP synthase subunit c, chloroplastic (82 aa).

2 helical membrane-spanning segments follow: residues 3–23 (PLIC…GAIG) and 57–77 (LAFM…LMFA).

It belongs to the ATPase C chain family. As to quaternary structure, F-type ATPases have 2 components, F(1) - the catalytic core - and F(0) - the membrane proton channel. F(1) has five subunits: alpha(3), beta(3), gamma(1), delta(1), epsilon(1). F(0) has four main subunits: a(1), b(1), b'(1) and c(10-14). The alpha and beta chains form an alternating ring which encloses part of the gamma chain. F(1) is attached to F(0) by a central stalk formed by the gamma and epsilon chains, while a peripheral stalk is formed by the delta, b and b' chains.

The protein localises to the plastid. It localises to the chloroplast thylakoid membrane. Functionally, f(1)F(0) ATP synthase produces ATP from ADP in the presence of a proton or sodium gradient. F-type ATPases consist of two structural domains, F(1) containing the extramembraneous catalytic core and F(0) containing the membrane proton channel, linked together by a central stalk and a peripheral stalk. During catalysis, ATP synthesis in the catalytic domain of F(1) is coupled via a rotary mechanism of the central stalk subunits to proton translocation. In terms of biological role, key component of the F(0) channel; it plays a direct role in translocation across the membrane. A homomeric c-ring of between 10-14 subunits forms the central stalk rotor element with the F(1) delta and epsilon subunits. The protein is ATP synthase subunit c, chloroplastic of Ostreococcus tauri.